The following is a 302-amino-acid chain: uncharacterized protein (302 aa).

Transmembrane regions (helical) follow at residues 25–45 (SFIF…LQIF), 58–78 (FSYL…VIAL), 104–124 (IQVG…WMFL), 158–178 (YGLL…ATVL), 182–202 (FAWA…QYVP), 215–235 (ALSI…GYLL), and 247–267 (MMYI…MFYL). A PQ-loop domain is found at 175 to 245 (ATVLSSNFAW…SRLPGTNWTT (71 aa)).

Its subcellular location is the membrane. This is an uncharacterized protein from Schizosaccharomyces pombe (strain 972 / ATCC 24843) (Fission yeast).